The sequence spans 142 residues: Succinate dehydrogenase subunit 6, mitochondrial (142 aa).

Component of complex II composed of eight subunits in plants: four classical SDH subunits SDH1, SDH2, SDH3 and SDH4 (a flavoprotein (FP), an iron-sulfur protein (IP), and a cytochrome b composed of a large and a small subunit.), as well as four subunits unknown in mitochondria from bacteria and heterotrophic eukaryotes.

The protein localises to the mitochondrion inner membrane. It functions in the pathway carbohydrate metabolism; tricarboxylic acid cycle. This chain is Succinate dehydrogenase subunit 6, mitochondrial, found in Oryza sativa subsp. japonica (Rice).